The following is a 178-amino-acid chain: MRGLLVGRMQPFHRGHLQVIKSILEEVDELIICIGSAQLSHSIRDPFTAGERVMMLTKALSENGIPASRYYIIPVQDIECNALWVGHIKMLTPPFDRVYSGNPLVQRLFSEDGYEVTAPPLFYRDRYSGTEVRRRMLDDGDWRSLLPESVVEVIDEINGVERIKHLAKKEVSELGGIS.

This sequence belongs to the archaeal NMN adenylyltransferase family. As to quaternary structure, homohexamer.

The protein resides in the cytoplasm. It catalyses the reaction beta-nicotinamide D-ribonucleotide + ATP + H(+) = diphosphate + NAD(+). It functions in the pathway cofactor biosynthesis; NAD(+) biosynthesis; NAD(+) from nicotinamide D-ribonucleotide: step 1/1. The polypeptide is Nicotinamide-nucleotide adenylyltransferase (Methanothermobacter thermautotrophicus (strain ATCC 29096 / DSM 1053 / JCM 10044 / NBRC 100330 / Delta H) (Methanobacterium thermoautotrophicum)).